We begin with the raw amino-acid sequence, 416 residues long: Ribosome biogenesis protein WDR12 homolog (416 aa).

The ubiquitin-like (UBL) domain stretch occupies residues 7 to 89 (VQVRFFTKQK…ESVVEIEYLE (83 aa)). WD repeat units lie at residues 101 to 138 (VHDD…LAKV), 140 to 184 (GHTS…ASCV), 189 to 228 (GHTQ…EGGD), 259 to 297 (GHTQ…NKQT), 299 to 338 (TGSK…GQVV), 344 to 384 (SHQG…TPLY), and 388 to 416 (GHQD…LILY). Positions 226–245 (GGDEGENGSLSKKQKTTGVK) are disordered.

This sequence belongs to the WD repeat WDR12/YTM1 family.

Its subcellular location is the nucleus. It is found in the nucleolus. It localises to the nucleoplasm. In terms of biological role, required for maturation of ribosomal RNAs and formation of the large ribosomal subunit. In Nematostella vectensis (Starlet sea anemone), this protein is Ribosome biogenesis protein WDR12 homolog.